A 274-amino-acid chain; its full sequence is 2,3,4,5-tetrahydropyridine-2,6-dicarboxylate N-succinyltransferase (274 aa).

Substrate is bound by residues arginine 104 and aspartate 141.

This sequence belongs to the transferase hexapeptide repeat family. As to quaternary structure, homotrimer.

Its subcellular location is the cytoplasm. It carries out the reaction (S)-2,3,4,5-tetrahydrodipicolinate + succinyl-CoA + H2O = (S)-2-succinylamino-6-oxoheptanedioate + CoA. The protein operates within amino-acid biosynthesis; L-lysine biosynthesis via DAP pathway; LL-2,6-diaminopimelate from (S)-tetrahydrodipicolinate (succinylase route): step 1/3. The sequence is that of 2,3,4,5-tetrahydropyridine-2,6-dicarboxylate N-succinyltransferase from Shewanella putrefaciens (strain CN-32 / ATCC BAA-453).